The sequence spans 547 residues: Chaperonin GroEL 2 (547 aa).

Residues 29-32 (TLGP), 86-90 (DGTTT), Gly-418, 482-484 (NAA), and Asp-498 each bind ATP.

It belongs to the chaperonin (HSP60) family. In terms of assembly, forms a cylinder of 14 subunits composed of two heptameric rings stacked back-to-back. Interacts with the co-chaperonin GroES.

Its subcellular location is the cytoplasm. It catalyses the reaction ATP + H2O + a folded polypeptide = ADP + phosphate + an unfolded polypeptide.. Its function is as follows. Together with its co-chaperonin GroES, plays an essential role in assisting protein folding. The GroEL-GroES system forms a nano-cage that allows encapsulation of the non-native substrate proteins and provides a physical environment optimized to promote and accelerate protein folding. This is Chaperonin GroEL 2 from Corynebacterium efficiens (strain DSM 44549 / YS-314 / AJ 12310 / JCM 11189 / NBRC 100395).